The sequence spans 356 residues: Tyrosine recombinase XerS (356 aa).

The Core-binding (CB) domain occupies 16–121; that stretch reads IMPWYVLDYY…ALSSLYKYLT (106 aa). The Tyr recombinase domain maps to 169-354; that stretch reads AFLDYVDKEY…VNDEQKNALD (186 aa). Catalysis depends on residues Arg-210, Lys-234, His-306, Arg-309, and His-332. Tyr-341 serves as the catalytic O-(3'-phospho-DNA)-tyrosine intermediate.

The protein belongs to the 'phage' integrase family. XerS subfamily.

It is found in the cytoplasm. With respect to regulation, ftsK is required for recombination. Site-specific tyrosine recombinase, which acts by catalyzing the cutting and rejoining of the recombining DNA molecules. Essential to convert dimers of the bacterial chromosome into monomers to permit their segregation at cell division. The protein is Tyrosine recombinase XerS of Streptococcus pyogenes serotype M2 (strain MGAS10270).